The chain runs to 55 residues: ATP synthase F(0) complex subunit 8 (55 aa).

Residues 9-29 form a helical membrane-spanning segment; the sequence is WFAIMVFSWFVFLIFLPPKIM.

It belongs to the ATPase protein 8 family. In terms of assembly, component of the ATP synthase complex composed at least of ATP5F1A/subunit alpha, ATP5F1B/subunit beta, ATP5MC1/subunit c (homooctomer), MT-ATP6/subunit a, MT-ATP8/subunit 8, ATP5ME/subunit e, ATP5MF/subunit f, ATP5MG/subunit g, ATP5MK/subunit k, ATP5MJ/subunit j, ATP5F1C/subunit gamma, ATP5F1D/subunit delta, ATP5F1E/subunit epsilon, ATP5PF/subunit F6, ATP5PB/subunit b, ATP5PD/subunit d, ATP5PO/subunit OSCP. ATP synthase complex consists of a soluble F(1) head domain (subunits alpha(3) and beta(3)) - the catalytic core - and a membrane F(0) domain - the membrane proton channel (subunits c, a, 8, e, f, g, k and j). These two domains are linked by a central stalk (subunits gamma, delta, and epsilon) rotating inside the F1 region and a stationary peripheral stalk (subunits F6, b, d, and OSCP).

The protein localises to the mitochondrion membrane. Subunit 8, of the mitochondrial membrane ATP synthase complex (F(1)F(0) ATP synthase or Complex V) that produces ATP from ADP in the presence of a proton gradient across the membrane which is generated by electron transport complexes of the respiratory chain. ATP synthase complex consist of a soluble F(1) head domain - the catalytic core - and a membrane F(1) domain - the membrane proton channel. These two domains are linked by a central stalk rotating inside the F(1) region and a stationary peripheral stalk. During catalysis, ATP synthesis in the catalytic domain of F(1) is coupled via a rotary mechanism of the central stalk subunits to proton translocation. In vivo, can only synthesize ATP although its ATP hydrolase activity can be activated artificially in vitro. Part of the complex F(0) domain. This Tetraodon nigroviridis (Spotted green pufferfish) protein is ATP synthase F(0) complex subunit 8.